The sequence spans 273 residues: Signal recognition particle subunit SEC65 (273 aa).

A disordered region spans residues 25–71 (PSLRTPIAPKITPKVVRSQDQENPAFLPGTNNNSNSNNNSSNEKEQL). Residues 55–65 (NNNSNSNNNSS) are compositionally biased toward low complexity.

In terms of assembly, fungal signal recognition particle (SRP) complex consists of a 7S RNA molecule (scR1) and at least six protein subunits: SRP72, SRP68, SRP54, SEC65, SRP21 and SRP14.

The protein resides in the cytoplasm. Signal-recognition-particle (SRP) assembly has a crucial role in targeting secretory proteins to the rough endoplasmic reticulum (ER) membrane. SRP is required for the cotranslational protein translocation for ER import and preferentially recognizes strongly hydrophobic signal sequences. It is involved in targeting the nascent chain-ribosome (RNC) complex to the ER and is proposed to participate in the arrest of nascent chain elongation during membrane targeting. SEC65 is required for SRP integrity. The polypeptide is Signal recognition particle subunit SEC65 (SEC65) (Saccharomyces cerevisiae (strain ATCC 204508 / S288c) (Baker's yeast)).